The primary structure comprises 136 residues: Urease subunit beta (136 aa).

The disordered stretch occupies residues 113 to 136; sequence NDEYAGVFGDNGAENVNKKGRKRS.

It belongs to the urease beta subunit family. In terms of assembly, heterotrimer of UreA (gamma), UreB (beta) and UreC (alpha) subunits. Three heterotrimers associate to form the active enzyme.

Its subcellular location is the cytoplasm. It carries out the reaction urea + 2 H2O + H(+) = hydrogencarbonate + 2 NH4(+). The protein operates within nitrogen metabolism; urea degradation; CO(2) and NH(3) from urea (urease route): step 1/1. This is Urease subunit beta from Staphylococcus aureus (strain Newman).